The chain runs to 197 residues: Lipoprotein signal peptidase (197 aa).

The next 2 membrane-spanning stretches (helical) occupy residues 73 to 93 (SNAI…YLMI) and 97 to 117 (TIGS…NLID). Catalysis depends on residues D126 and D144. Residues 135–155 (YSFPVFNLADCFITIGVIILI) form a helical membrane-spanning segment.

This sequence belongs to the peptidase A8 family.

It localises to the cell inner membrane. The enzyme catalyses Release of signal peptides from bacterial membrane prolipoproteins. Hydrolyzes -Xaa-Yaa-Zaa-|-(S,diacylglyceryl)Cys-, in which Xaa is hydrophobic (preferably Leu), and Yaa (Ala or Ser) and Zaa (Gly or Ala) have small, neutral side chains.. Its pathway is protein modification; lipoprotein biosynthesis (signal peptide cleavage). This protein specifically catalyzes the removal of signal peptides from prolipoproteins. The sequence is that of Lipoprotein signal peptidase from Rickettsia felis (strain ATCC VR-1525 / URRWXCal2) (Rickettsia azadi).